Here is a 245-residue protein sequence, read N- to C-terminus: 1-(5-phosphoribosyl)-5-[(5-phosphoribosylamino)methylideneamino] imidazole-4-carboxamide isomerase (245 aa).

Asp8 acts as the Proton acceptor in catalysis. The active-site Proton donor is Asp129.

Belongs to the HisA/HisF family.

The protein localises to the cytoplasm. The enzyme catalyses 1-(5-phospho-beta-D-ribosyl)-5-[(5-phospho-beta-D-ribosylamino)methylideneamino]imidazole-4-carboxamide = 5-[(5-phospho-1-deoxy-D-ribulos-1-ylimino)methylamino]-1-(5-phospho-beta-D-ribosyl)imidazole-4-carboxamide. Its pathway is amino-acid biosynthesis; L-histidine biosynthesis; L-histidine from 5-phospho-alpha-D-ribose 1-diphosphate: step 4/9. The sequence is that of 1-(5-phosphoribosyl)-5-[(5-phosphoribosylamino)methylideneamino] imidazole-4-carboxamide isomerase from Geotalea daltonii (strain DSM 22248 / JCM 15807 / FRC-32) (Geobacter daltonii).